A 276-amino-acid chain; its full sequence is Type II pantothenate kinase (276 aa).

Residue 8 to 15 (DAGGTLTK) participates in ATP binding. The active-site Proton acceptor is the glutamate 76. ATP is bound by residues threonine 105, 127 to 131 (GGTIM), phenylalanine 143, and serine 230.

The protein belongs to the type II pantothenate kinase family. As to quaternary structure, homodimer.

The protein resides in the cytoplasm. It catalyses the reaction (R)-pantothenate + ATP = (R)-4'-phosphopantothenate + ADP + H(+). The protein operates within cofactor biosynthesis; coenzyme A biosynthesis; CoA from (R)-pantothenate: step 1/5. Its function is as follows. Catalyzes the phosphorylation of pantothenate (Pan), the first step in CoA biosynthesis. This chain is Type II pantothenate kinase, found in Bacillus cereus (strain AH820).